Consider the following 84-residue polypeptide: MLALISILLLFYISQNNLITLLIAIEILLLTVTVKLIYMGSVYDDIYGTIFSIVIIILAGAESAIGLSILVSYYRLRGKVGHTI.

A run of 2 helical transmembrane segments spans residues 7–29 and 50–70; these read ILLL…EILL and IFSI…LSIL.

This sequence belongs to the complex I subunit 4L family.

It localises to the mitochondrion membrane. It catalyses the reaction a ubiquinone + NADH + 5 H(+)(in) = a ubiquinol + NAD(+) + 4 H(+)(out). In terms of biological role, core subunit of the mitochondrial membrane respiratory chain NADH dehydrogenase (Complex I) that is believed to belong to the minimal assembly required for catalysis. Complex I functions in the transfer of electrons from NADH to the respiratory chain. The immediate electron acceptor for the enzyme is believed to be ubiquinone. The chain is NADH-ubiquinone oxidoreductase chain 4L (ND4L) from Candida parapsilosis (Yeast).